Reading from the N-terminus, the 437-residue chain is tRNA-2-methylthio-N(6)-dimethylallyladenosine synthase (437 aa).

Residues 3–120 (RKLFIETHGC…LPEMIDAART (118 aa)) enclose the MTTase N-terminal domain. Cys-12, Cys-49, Cys-83, Cys-157, Cys-161, and Cys-164 together coordinate [4Fe-4S] cluster. In terms of domain architecture, Radical SAM core spans 143-370 (RVDGPSAYVS…QQRINQQGFE (228 aa)). Residues 373–437 (RRMVGTTQRI…PHSLRGSLLS (65 aa)) enclose the TRAM domain.

This sequence belongs to the methylthiotransferase family. MiaB subfamily. As to quaternary structure, monomer. The cofactor is [4Fe-4S] cluster.

The protein localises to the cytoplasm. It carries out the reaction N(6)-dimethylallyladenosine(37) in tRNA + (sulfur carrier)-SH + AH2 + 2 S-adenosyl-L-methionine = 2-methylsulfanyl-N(6)-dimethylallyladenosine(37) in tRNA + (sulfur carrier)-H + 5'-deoxyadenosine + L-methionine + A + S-adenosyl-L-homocysteine + 2 H(+). Its function is as follows. Catalyzes the methylthiolation of N6-(dimethylallyl)adenosine (i(6)A), leading to the formation of 2-methylthio-N6-(dimethylallyl)adenosine (ms(2)i(6)A) at position 37 in tRNAs that read codons beginning with uridine. The chain is tRNA-2-methylthio-N(6)-dimethylallyladenosine synthase from Stutzerimonas stutzeri (strain A1501) (Pseudomonas stutzeri).